The sequence spans 101 residues: B3 domain-containing protein At1g08985 (101 aa).

Residues 7-101 (IVKTLSETDC…WQNTKFIFSM (95 aa)) constitute a DNA-binding region (TF-B3).

It localises to the nucleus. The protein is B3 domain-containing protein At1g08985 of Arabidopsis thaliana (Mouse-ear cress).